Here is a 316-residue protein sequence, read N- to C-terminus: Ribosomal RNA small subunit methyltransferase H (316 aa).

S-adenosyl-L-methionine contacts are provided by residues 37-39 (GGH), Asp56, Phe83, Asp106, and His113. The interval 276–316 (PILPSEEETKENPASRSAKLRVLRKTKSADKKYKKENSKEE) is disordered. Residues 302-316 (KSADKKYKKENSKEE) show a composition bias toward basic and acidic residues.

This sequence belongs to the methyltransferase superfamily. RsmH family.

It is found in the cytoplasm. The catalysed reaction is cytidine(1402) in 16S rRNA + S-adenosyl-L-methionine = N(4)-methylcytidine(1402) in 16S rRNA + S-adenosyl-L-homocysteine + H(+). Specifically methylates the N4 position of cytidine in position 1402 (C1402) of 16S rRNA. This chain is Ribosomal RNA small subunit methyltransferase H, found in Leptospira borgpetersenii serovar Hardjo-bovis (strain L550).